The sequence spans 332 residues: DNA-directed RNA polymerase subunit alpha (332 aa).

Residues 1–231 (MVREKVTVST…DLFIPFLHME (231 aa)) are alpha N-terminal domain (alpha-NTD). The segment at 262–332 (LSLESLFIDQ…FALDLPKNLN (71 aa)) is alpha C-terminal domain (alpha-CTD).

This sequence belongs to the RNA polymerase alpha chain family. In terms of assembly, in plastids the minimal PEP RNA polymerase catalytic core is composed of four subunits: alpha, beta, beta', and beta''. When a (nuclear-encoded) sigma factor is associated with the core the holoenzyme is formed, which can initiate transcription.

It localises to the plastid. The catalysed reaction is RNA(n) + a ribonucleoside 5'-triphosphate = RNA(n+1) + diphosphate. Functionally, DNA-dependent RNA polymerase catalyzes the transcription of DNA into RNA using the four ribonucleoside triphosphates as substrates. The chain is DNA-directed RNA polymerase subunit alpha from Cuscuta japonica (Japanese dodder).